A 327-amino-acid polypeptide reads, in one-letter code: Transaldolase (327 aa).

Lys132 (schiff-base intermediate with substrate) is an active-site residue.

The protein belongs to the transaldolase family. Type 1 subfamily.

Its subcellular location is the cytoplasm. It carries out the reaction D-sedoheptulose 7-phosphate + D-glyceraldehyde 3-phosphate = D-erythrose 4-phosphate + beta-D-fructose 6-phosphate. Its pathway is carbohydrate degradation; pentose phosphate pathway; D-glyceraldehyde 3-phosphate and beta-D-fructose 6-phosphate from D-ribose 5-phosphate and D-xylulose 5-phosphate (non-oxidative stage): step 2/3. Its function is as follows. Transaldolase is important for the balance of metabolites in the pentose-phosphate pathway. The protein is Transaldolase of Chlamydia muridarum (strain MoPn / Nigg).